Here is a 474-residue protein sequence, read N- to C-terminus: tRNA-2-methylthio-N(6)-dimethylallyladenosine synthase (474 aa).

The MTTase N-terminal domain maps to 3-120; that stretch reads QKLHIKTWGC…LPEMINQIRA (118 aa). Residues Cys12, Cys49, Cys83, Cys157, Cys161, and Cys164 each coordinate [4Fe-4S] cluster. Residues 143 to 375 enclose the Radical SAM core domain; the sequence is KAEGPTAFVS…QQRINNQAAQ (233 aa). The 64-residue stretch at 378–441 folds into the TRAM domain; the sequence is RAMLGTEQRV…TNSLRGDVVR (64 aa).

The protein belongs to the methylthiotransferase family. MiaB subfamily. In terms of assembly, monomer. It depends on [4Fe-4S] cluster as a cofactor.

The protein resides in the cytoplasm. It carries out the reaction N(6)-dimethylallyladenosine(37) in tRNA + (sulfur carrier)-SH + AH2 + 2 S-adenosyl-L-methionine = 2-methylsulfanyl-N(6)-dimethylallyladenosine(37) in tRNA + (sulfur carrier)-H + 5'-deoxyadenosine + L-methionine + A + S-adenosyl-L-homocysteine + 2 H(+). Catalyzes the methylthiolation of N6-(dimethylallyl)adenosine (i(6)A), leading to the formation of 2-methylthio-N6-(dimethylallyl)adenosine (ms(2)i(6)A) at position 37 in tRNAs that read codons beginning with uridine. In Mannheimia succiniciproducens (strain KCTC 0769BP / MBEL55E), this protein is tRNA-2-methylthio-N(6)-dimethylallyladenosine synthase.